Consider the following 175-residue polypeptide: Snake venom metalloproteinase BpMP-1 (175 aa).

One can recognise a Peptidase M12B domain in the interval 1-175 (YIELAVVADH…KHNPQCILNK (175 aa)). Residues Glu-3 and Asp-74 each coordinate Ca(2+). Disulfide bonds link Cys-98–Cys-171, Cys-131–Cys-155, and Cys-133–Cys-138. His-117 is a Zn(2+) binding site. Residue Glu-118 is part of the active site. Residues His-121 and His-127 each contribute to the Zn(2+) site. Ca(2+)-binding residues include Cys-171 and Asn-174.

The protein belongs to the venom metalloproteinase (M12B) family. P-I subfamily. Monomer. Requires Zn(2+) as cofactor. As to expression, expressed by the venom gland.

It localises to the secreted. Its activity is regulated as follows. Inhibited by EDTA, 1,10-phenanthroline and beta-mercaptoethanol. Not inhibited by the serine protease inhibitors aprotinin and benzamidin. Functionally, non-hemorrhagic snake venom zinc metalloprotease that hydrolyzes the Aalpha-chain of fibrinogen, more slowly the Bbeta-chain and shows no effect on the gamma chain. Has no coagulant activity on bovine plasma and fibrinogen. This Bothrops pauloensis (Neuwied's lancehead) protein is Snake venom metalloproteinase BpMP-1.